A 305-amino-acid polypeptide reads, in one-letter code: Putative cuticle collagen 90 (305 aa).

Disordered stretches follow at residues 95 to 117 (AGPPGPPGLPGKRGDEGVVGDLG) and 146 to 305 (PPGQ…AKRH). Triple-helical region regions lie at residues 96–125 (GPPGPPGLPGKRGDEGVVGDLGRSGASGIS), 142–204 (GPAG…PGTA), 208–252 (GAVG…NGRD), and 256–270 (GQPGKAGEPGAVGKD). Residues 150-162 (QGPVGPQGFPGVV) show a composition bias toward low complexity. Over residues 278–288 (ARRDSKTESVH) the composition is skewed to basic and acidic residues.

The protein belongs to the cuticular collagen family. Collagen polypeptide chains are complexed within the cuticle by disulfide bonds and other types of covalent cross-links.

Functionally, nematode cuticles are composed largely of collagen-like proteins. The cuticle functions both as an exoskeleton and as a barrier to protect the worm from its environment. This chain is Putative cuticle collagen 90 (col-90), found in Caenorhabditis elegans.